The following is a 372-amino-acid chain: UDP-N-acetylglucosamine--N-acetylmuramyl-(pentapeptide) pyrophosphoryl-undecaprenol N-acetylglucosamine transferase (372 aa).

UDP-N-acetyl-alpha-D-glucosamine-binding positions include 11–13 (TAG), Asn123, Arg160, Ser200, and Gln298.

Belongs to the glycosyltransferase 28 family. MurG subfamily.

The protein resides in the cell membrane. It catalyses the reaction di-trans,octa-cis-undecaprenyl diphospho-N-acetyl-alpha-D-muramoyl-L-alanyl-D-glutamyl-meso-2,6-diaminopimeloyl-D-alanyl-D-alanine + UDP-N-acetyl-alpha-D-glucosamine = di-trans,octa-cis-undecaprenyl diphospho-[N-acetyl-alpha-D-glucosaminyl-(1-&gt;4)]-N-acetyl-alpha-D-muramoyl-L-alanyl-D-glutamyl-meso-2,6-diaminopimeloyl-D-alanyl-D-alanine + UDP + H(+). It functions in the pathway cell wall biogenesis; peptidoglycan biosynthesis. Cell wall formation. Catalyzes the transfer of a GlcNAc subunit on undecaprenyl-pyrophosphoryl-MurNAc-pentapeptide (lipid intermediate I) to form undecaprenyl-pyrophosphoryl-MurNAc-(pentapeptide)GlcNAc (lipid intermediate II). This chain is UDP-N-acetylglucosamine--N-acetylmuramyl-(pentapeptide) pyrophosphoryl-undecaprenol N-acetylglucosamine transferase, found in Cutibacterium acnes (strain DSM 16379 / KPA171202) (Propionibacterium acnes).